A 118-amino-acid chain; its full sequence is Large ribosomal subunit protein bL19 (118 aa).

The protein belongs to the bacterial ribosomal protein bL19 family.

Functionally, this protein is located at the 30S-50S ribosomal subunit interface and may play a role in the structure and function of the aminoacyl-tRNA binding site. This Helicobacter pylori (strain G27) protein is Large ribosomal subunit protein bL19.